The following is a 173-amino-acid chain: Large ribosomal subunit protein uL10 (173 aa).

Belongs to the universal ribosomal protein uL10 family. Part of the ribosomal stalk of the 50S ribosomal subunit. The N-terminus interacts with L11 and the large rRNA to form the base of the stalk. The C-terminus forms an elongated spine to which L12 dimers bind in a sequential fashion forming a multimeric L10(L12)X complex.

Functionally, forms part of the ribosomal stalk, playing a central role in the interaction of the ribosome with GTP-bound translation factors. This is Large ribosomal subunit protein uL10 from Chlorobaculum tepidum (strain ATCC 49652 / DSM 12025 / NBRC 103806 / TLS) (Chlorobium tepidum).